The chain runs to 111 residues: Cell cycle protein GpsB (111 aa).

Residues 38 to 72 (IKDYEAFHKEFEQLKQQNARLKRELEEQKLAATQV) adopt a coiled-coil conformation.

The protein belongs to the GpsB family. As to quaternary structure, forms polymers through the coiled coil domains. Interacts with PBP1, MreC and EzrA.

Its subcellular location is the cytoplasm. Its function is as follows. Divisome component that associates with the complex late in its assembly, after the Z-ring is formed, and is dependent on DivIC and PBP2B for its recruitment to the divisome. Together with EzrA, is a key component of the system that regulates PBP1 localization during cell cycle progression. Its main role could be the removal of PBP1 from the cell pole after pole maturation is completed. Also contributes to the recruitment of PBP1 to the division complex. Not essential for septum formation. This Bacillus cereus (strain ATCC 10987 / NRS 248) protein is Cell cycle protein GpsB.